Consider the following 296-residue polypeptide: Elongation factor Ts (296 aa).

Residues 79–82 are involved in Mg(2+) ion dislocation from EF-Tu; it reads TDFV.

The protein belongs to the EF-Ts family.

The protein resides in the cytoplasm. Its function is as follows. Associates with the EF-Tu.GDP complex and induces the exchange of GDP to GTP. It remains bound to the aminoacyl-tRNA.EF-Tu.GTP complex up to the GTP hydrolysis stage on the ribosome. The chain is Elongation factor Ts from Paracoccus denitrificans (strain Pd 1222).